We begin with the raw amino-acid sequence, 270 residues long: MLLGSVPQLDRIAVQLGPFPVYWYGVIIGTGVLLGLWLATREGERLGIHKDTFIDLVLIAVPIAILFARMYYVIFEWEYYSQNPSQIINIRQGGLAIHGGLIGAVITGILFAKRRGLSFWKLADIAAPSILLGQAIGRWGNFMNQEAHGDEVTRQFLEGLHLPDFIINQMYIDGVYYHPTFLYESLWNFAGVILLLALRKVNLRRGELFFTYLIWYSVGRFFVEGLRTDSLMLGPLRIAQVMSIGIVVISIIFIIVRRKMGQADKRYLEN.

The next 4 helical transmembrane spans lie at 19 to 39 (FPVY…LWLA), 54 to 74 (IDLV…YYVI), 92 to 112 (QGGL…ILFA), and 116 to 136 (GLSF…GQAI). Arg138 contacts a 1,2-diacyl-sn-glycero-3-phospho-(1'-sn-glycerol). A run of 3 helical transmembrane segments spans residues 178 to 198 (HPTF…LLAL), 206 to 226 (GELF…VEGL), and 236 to 256 (LRIA…FIIV).

Belongs to the Lgt family.

Its subcellular location is the cell membrane. The enzyme catalyses L-cysteinyl-[prolipoprotein] + a 1,2-diacyl-sn-glycero-3-phospho-(1'-sn-glycerol) = an S-1,2-diacyl-sn-glyceryl-L-cysteinyl-[prolipoprotein] + sn-glycerol 1-phosphate + H(+). The protein operates within protein modification; lipoprotein biosynthesis (diacylglyceryl transfer). In terms of biological role, catalyzes the transfer of the diacylglyceryl group from phosphatidylglycerol to the sulfhydryl group of the N-terminal cysteine of a prolipoprotein, the first step in the formation of mature lipoproteins. This Bacillus mycoides (strain KBAB4) (Bacillus weihenstephanensis) protein is Phosphatidylglycerol--prolipoprotein diacylglyceryl transferase.